The following is a 137-amino-acid chain: NADH dehydrogenase [ubiquinone] 1 beta subcomplex subunit 7 (137 aa).

Glycine 2 is lipidated: N-myristoyl glycine. The 43-residue stretch at 56–98 (RDYCAHYLIRLLKCKRDSFPNFLACKHEQHDWDYCEHLDYVKR) folds into the CHCH domain. The Cx9C motif 1 signature appears at 59–69 (CAHYLIRLLKC). 2 cysteine pairs are disulfide-bonded: cysteine 59/cysteine 90 and cysteine 69/cysteine 80. The residue at position 73 (serine 73) is a Phosphoserine. A Cx9C motif 2 motif is present at residues 80-90 (CKHEQHDWDYC).

This sequence belongs to the complex I NDUFB7 subunit family. As to quaternary structure, complex I is composed of 45 different subunits.

Its subcellular location is the mitochondrion inner membrane. It is found in the mitochondrion intermembrane space. Accessory subunit of the mitochondrial membrane respiratory chain NADH dehydrogenase (Complex I), that is believed not to be involved in catalysis. Complex I functions in the transfer of electrons from NADH to the respiratory chain. The immediate electron acceptor for the enzyme is believed to be ubiquinone. In Mus musculus (Mouse), this protein is NADH dehydrogenase [ubiquinone] 1 beta subcomplex subunit 7 (Ndufb7).